The chain runs to 283 residues: MQLRRKLARAMGRAITDFDMIADGDRILCAVSGGKDSYAMHALLVDLARRAPVRFSVIAVNIDQGHPGYPGHLLTDYMAAGGHEFRMISEDTYSIVTEKIPENKTYCSLCSRLRRGILYRIARELGCSKIALGHHRDDAVTTLLLNLIFAGQLKSMPPKLISDDGDNIVIRPLIYCAEAELAAFAAEERFPIIPCDLCGSQENLQRKAVSQLLADLDARHPGTRQNMLAALGNVRPSHLFDTGLWKRLGLEVAREEGSARDEAGVGAPAPDVLPVGNLLRNLA.

Residues 32–37 carry the PP-loop motif motif; the sequence is SGGKDS. [4Fe-4S] cluster contacts are provided by Cys107, Cys110, and Cys198.

The protein belongs to the TtcA family. As to quaternary structure, homodimer. Mg(2+) is required as a cofactor. It depends on [4Fe-4S] cluster as a cofactor.

Its subcellular location is the cytoplasm. The enzyme catalyses cytidine(32) in tRNA + S-sulfanyl-L-cysteinyl-[cysteine desulfurase] + AH2 + ATP = 2-thiocytidine(32) in tRNA + L-cysteinyl-[cysteine desulfurase] + A + AMP + diphosphate + H(+). The protein operates within tRNA modification. Catalyzes the ATP-dependent 2-thiolation of cytidine in position 32 of tRNA, to form 2-thiocytidine (s(2)C32). The sulfur atoms are provided by the cysteine/cysteine desulfurase (IscS) system. The protein is tRNA-cytidine(32) 2-sulfurtransferase of Sorangium cellulosum (strain So ce56) (Polyangium cellulosum (strain So ce56)).